The primary structure comprises 410 residues: Multifunctional CCA protein (410 aa).

ATP contacts are provided by glycine 8 and arginine 11. 2 residues coordinate CTP: glycine 8 and arginine 11. Mg(2+) is bound by residues glutamate 21 and aspartate 23. Residues arginine 91, arginine 137, and arginine 140 each contribute to the ATP site. Residues arginine 91, arginine 137, and arginine 140 each coordinate CTP. The HD domain maps to 228-329; it reads TGVHVLSVLR…LELLQRFDVF (102 aa).

Belongs to the tRNA nucleotidyltransferase/poly(A) polymerase family. Bacterial CCA-adding enzyme type 1 subfamily. As to quaternary structure, monomer. Can also form homodimers and oligomers. The cofactor is Mg(2+). Requires Ni(2+) as cofactor.

The catalysed reaction is a tRNA precursor + 2 CTP + ATP = a tRNA with a 3' CCA end + 3 diphosphate. It carries out the reaction a tRNA with a 3' CCA end + 2 CTP + ATP = a tRNA with a 3' CCACCA end + 3 diphosphate. Functionally, catalyzes the addition and repair of the essential 3'-terminal CCA sequence in tRNAs without using a nucleic acid template. Adds these three nucleotides in the order of C, C, and A to the tRNA nucleotide-73, using CTP and ATP as substrates and producing inorganic pyrophosphate. tRNA 3'-terminal CCA addition is required both for tRNA processing and repair. Also involved in tRNA surveillance by mediating tandem CCA addition to generate a CCACCA at the 3' terminus of unstable tRNAs. While stable tRNAs receive only 3'-terminal CCA, unstable tRNAs are marked with CCACCA and rapidly degraded. The protein is Multifunctional CCA protein of Ectopseudomonas mendocina (strain ymp) (Pseudomonas mendocina).